Consider the following 233-residue polypeptide: Large ribosomal subunit protein uL1 (233 aa).

It belongs to the universal ribosomal protein uL1 family. In terms of assembly, part of the 50S ribosomal subunit.

In terms of biological role, binds directly to 23S rRNA. The L1 stalk is quite mobile in the ribosome, and is involved in E site tRNA release. Protein L1 is also a translational repressor protein, it controls the translation of the L11 operon by binding to its mRNA. The sequence is that of Large ribosomal subunit protein uL1 from Geobacillus thermodenitrificans (strain NG80-2).